Consider the following 252-residue polypeptide: Ribosomal RNA small subunit methyltransferase J (252 aa).

Residues 101–102 (RD), 117–118 (ER), 153–154 (SS), and aspartate 171 contribute to the S-adenosyl-L-methionine site.

This sequence belongs to the methyltransferase superfamily. RsmJ family.

The protein localises to the cytoplasm. It carries out the reaction guanosine(1516) in 16S rRNA + S-adenosyl-L-methionine = N(2)-methylguanosine(1516) in 16S rRNA + S-adenosyl-L-homocysteine + H(+). Its function is as follows. Specifically methylates the guanosine in position 1516 of 16S rRNA. The sequence is that of Ribosomal RNA small subunit methyltransferase J from Salmonella typhimurium (strain LT2 / SGSC1412 / ATCC 700720).